A 157-amino-acid chain; its full sequence is Small ribosomal subunit protein uS7 (157 aa).

The protein belongs to the universal ribosomal protein uS7 family. As to quaternary structure, part of the 30S ribosomal subunit. Contacts proteins S9 and S11.

Functionally, one of the primary rRNA binding proteins, it binds directly to 16S rRNA where it nucleates assembly of the head domain of the 30S subunit. Is located at the subunit interface close to the decoding center, probably blocks exit of the E-site tRNA. The sequence is that of Small ribosomal subunit protein uS7 from Opitutus terrae (strain DSM 11246 / JCM 15787 / PB90-1).